The primary structure comprises 489 residues: Pup--protein ligase (489 aa).

Position 25 (E25) interacts with Mg(2+). R69 is an ATP binding site. Y71 serves as a coordination point for Mg(2+). Residue D73 is the Proton acceptor of the active site. E79 provides a ligand contact to Mg(2+). The ATP site is built by T82 and W447.

Belongs to the Pup ligase/Pup deamidase family. Pup-conjugating enzyme subfamily.

It carries out the reaction ATP + [prokaryotic ubiquitin-like protein]-L-glutamate + [protein]-L-lysine = ADP + phosphate + N(6)-([prokaryotic ubiquitin-like protein]-gamma-L-glutamyl)-[protein]-L-lysine.. Its pathway is protein degradation; proteasomal Pup-dependent pathway. The protein operates within protein modification; protein pupylation. Catalyzes the covalent attachment of the prokaryotic ubiquitin-like protein modifier Pup to the proteasomal substrate proteins, thereby targeting them for proteasomal degradation. This tagging system is termed pupylation. The ligation reaction involves the side-chain carboxylate of the C-terminal glutamate of Pup and the side-chain amino group of a substrate lysine. The chain is Pup--protein ligase from Corynebacterium efficiens (strain DSM 44549 / YS-314 / AJ 12310 / JCM 11189 / NBRC 100395).